The sequence spans 397 residues: MTKSQDIIEITNHYGAPNYHPLPIVISEAEGVWVKDPEGNKYMDMLSAYSAVNQGHRHPKIIQALKEQADRVTLTSRAFHSDQLGPWYEKICKLAGKEMVLPMNTGAEAVETAIKAARRWAYDVKGVAKDQAEIIAMKGNFHGRTLAAVSLSSEAEYQRGYGPLLGGFKLVEFGDIEQIKSAITPNTAAVLLEPIQGEAGINIPEDGFLKQVRDVCTENNVLFIADEIQAGLGRSGKMFATDWDNVVPDMYILGKALGGGVFPISCVLADKEILEVFNAGSHGSTFGGNPLACAVSNAALDVLVDEKLAERSLELGEYFQSKLKEIDNPVIKEVRGKGLFIGVELNEAARPYCEQLKELGLLCKETHDTVIRFAPPLIISQEDLDWAIDKVKQVFSK.

At K255 the chain carries N6-(pyridoxal phosphate)lysine.

This sequence belongs to the class-III pyridoxal-phosphate-dependent aminotransferase family. OAT subfamily. Requires pyridoxal 5'-phosphate as cofactor.

It localises to the cytoplasm. It catalyses the reaction a 2-oxocarboxylate + L-ornithine = L-glutamate 5-semialdehyde + an L-alpha-amino acid. Its pathway is amino-acid biosynthesis; L-proline biosynthesis; L-glutamate 5-semialdehyde from L-ornithine: step 1/1. In terms of biological role, catalyzes the interconversion of ornithine to glutamate semialdehyde. This Macrococcus caseolyticus (strain JCSC5402) (Macrococcoides caseolyticum) protein is Ornithine aminotransferase.